A 227-amino-acid polypeptide reads, in one-letter code: Ribonuclease 3 (227 aa).

The RNase III domain occupies F4–N133. E46 is a Mg(2+) binding site. D50 is a catalytic residue. N119 and E122 together coordinate Mg(2+). The active site involves E122. Residues D158–N226 form the DRBM domain.

Belongs to the ribonuclease III family. In terms of assembly, homodimer. Mg(2+) is required as a cofactor.

The protein localises to the cytoplasm. The catalysed reaction is Endonucleolytic cleavage to 5'-phosphomonoester.. Its function is as follows. Digests double-stranded RNA. Involved in the processing of primary rRNA transcript to yield the immediate precursors to the large and small rRNAs (23S and 16S). Processes some mRNAs, and tRNAs when they are encoded in the rRNA operon. Processes pre-crRNA and tracrRNA of type II CRISPR loci if present in the organism. This is Ribonuclease 3 from Rickettsia massiliae (strain Mtu5).